The following is a 495-amino-acid chain: DNA-directed RNA polymerase subunit alpha (495 aa).

The tract at residues methionine 1–proline 301 is alpha N-terminal domain (alpha-NTD). Disordered stretches follow at residues serine 159–histidine 227 and glutamine 391–threonine 495. The interval proline 170–threonine 237 is insert. The span at aspartate 172–serine 186 shows a compositional bias: basic and acidic residues. 2 stretches are compositionally biased toward polar residues: residues valine 207–threonine 219 and glutamine 391–alanine 403. An alpha C-terminal domain (alpha-CTD) region spans residues alanine 317–threonine 495. The span at arginine 417–arginine 426 shows a compositional bias: basic and acidic residues. Basic residues predominate over residues arginine 444 to alanine 453. 2 stretches are compositionally biased toward polar residues: residues lysine 464–glutamate 473 and leucine 486–threonine 495.

It belongs to the RNA polymerase alpha chain family. In plastids the minimal PEP RNA polymerase catalytic core is composed of four subunits: alpha, beta, beta', and beta''. When a (nuclear-encoded) sigma factor is associated with the core the holoenzyme is formed, which can initiate transcription.

The protein localises to the plastid. It localises to the chloroplast. The catalysed reaction is RNA(n) + a ribonucleoside 5'-triphosphate = RNA(n+1) + diphosphate. Functionally, DNA-dependent RNA polymerase catalyzes the transcription of DNA into RNA using the four ribonucleoside triphosphates as substrates. This Nephroselmis olivacea (Green alga) protein is DNA-directed RNA polymerase subunit alpha.